The primary structure comprises 263 residues: Small ribosomal subunit protein eS4 (263 aa).

The S4 RNA-binding domain maps to 42 to 104 (LPLIVFLRNR…TGEHFRLVYD (63 aa)).

The protein belongs to the eukaryotic ribosomal protein eS4 family.

The polypeptide is Small ribosomal subunit protein eS4 (RPS4Y1) (Pongo pygmaeus (Bornean orangutan)).